The sequence spans 302 residues: tRNA pseudouridine synthase B (302 aa).

The active-site Nucleophile is D42.

The protein belongs to the pseudouridine synthase TruB family. Type 1 subfamily.

The catalysed reaction is uridine(55) in tRNA = pseudouridine(55) in tRNA. Its function is as follows. Responsible for synthesis of pseudouridine from uracil-55 in the psi GC loop of transfer RNAs. The protein is tRNA pseudouridine synthase B of Leifsonia xyli subsp. xyli (strain CTCB07).